The following is a 71-amino-acid chain: Brevinin-1CG4 (71 aa).

Positions 1 to 22 (MFTLKKSLLLLFFLGTINLSLC) are cleaved as a signal peptide. A propeptide spans 23 to 45 (EQERNADEEERRDDSDKRDVEVE) (removed in mature form). Cys65 and Cys71 are disulfide-bonded.

It belongs to the frog skin active peptide (FSAP) family. Brevinin subfamily. Expressed by the skin glands.

The protein localises to the secreted. Its function is as follows. Antimicrobial peptide active against a variety of Gram-positive and some Gram-negative bacterial strains. Has antifungal activity against C.albicans ATCC 10231 and a slime mold isolate. Has hemolytic activity against human erythrocytes. This Amolops chunganensis (Chungan torrent frog) protein is Brevinin-1CG4.